A 141-amino-acid polypeptide reads, in one-letter code: ATP synthase epsilon chain (141 aa).

The protein belongs to the ATPase epsilon chain family. F-type ATPases have 2 components, CF(1) - the catalytic core - and CF(0) - the membrane proton channel. CF(1) has five subunits: alpha(3), beta(3), gamma(1), delta(1), epsilon(1). CF(0) has three main subunits: a, b and c.

It localises to the cell inner membrane. In terms of biological role, produces ATP from ADP in the presence of a proton gradient across the membrane. This is ATP synthase epsilon chain from Teredinibacter turnerae (strain ATCC 39867 / T7901).